We begin with the raw amino-acid sequence, 303 residues long: Elongation factor Ts (303 aa).

The interval 80–83 (TDFV) is involved in Mg(2+) ion dislocation from EF-Tu.

Belongs to the EF-Ts family.

It is found in the cytoplasm. Associates with the EF-Tu.GDP complex and induces the exchange of GDP to GTP. It remains bound to the aminoacyl-tRNA.EF-Tu.GTP complex up to the GTP hydrolysis stage on the ribosome. This is Elongation factor Ts from Clostridium botulinum (strain Alaska E43 / Type E3).